A 605-amino-acid polypeptide reads, in one-letter code: Translation factor GUF1 homolog, chloroplastic (605 aa).

Residues 7–189 (RRIRNFSIIA…RIVQVVPPPR (183 aa)) form the tr-type G domain. GTP is bound by residues 16–23 (AHIDHGKS), 82–86 (DTPGH), and 136–139 (NKID).

It belongs to the TRAFAC class translation factor GTPase superfamily. Classic translation factor GTPase family. LepA subfamily.

Its subcellular location is the plastid. It is found in the chloroplast. The enzyme catalyses GTP + H2O = GDP + phosphate + H(+). Functionally, promotes chloroplast protein synthesis. May act as a fidelity factor of the translation reaction, by catalyzing a one-codon backward translocation of tRNAs on improperly translocated ribosomes. The sequence is that of Translation factor GUF1 homolog, chloroplastic from Ostreococcus lucimarinus (strain CCE9901).